Consider the following 943-residue polypeptide: Protein translocase subunit SecA (943 aa).

Residues Gln-90, 108–112 (GEGKT), and Asp-509 contribute to the ATP site. Residues 535–560 (PNNEHKPPIPKQRSSKSKGGFSSKVG) form a disordered region. Low complexity predominate over residues 551-560 (SKGGFSSKVG).

Belongs to the SecA family. Monomer and homodimer. Part of the essential Sec protein translocation apparatus which comprises SecA, SecYEG and auxiliary proteins SecDF. Other proteins may also be involved.

It localises to the cell inner membrane. The protein localises to the cellular thylakoid membrane. Its subcellular location is the cytoplasm. The catalysed reaction is ATP + H2O + cellular proteinSide 1 = ADP + phosphate + cellular proteinSide 2.. Functionally, part of the Sec protein translocase complex. Interacts with the SecYEG preprotein conducting channel. Has a central role in coupling the hydrolysis of ATP to the transfer of proteins into and across the cell membrane, serving as an ATP-driven molecular motor driving the stepwise translocation of polypeptide chains across the membrane. Its function is as follows. Probably participates in protein translocation into and across both the cytoplasmic and thylakoid membranes in cyanobacterial cells. The sequence is that of Protein translocase subunit SecA from Prochlorococcus marinus (strain MIT 9312).